The chain runs to 222 residues: uncharacterized protein (222 aa).

Positions 1–27 (MSFTRRKFVLGMGTVIFFTGSASSLLA) form a signal peptide, tat-type signal. 4Fe-4S ferredoxin-type domains follow at residues 37–66 (YAMI…PAQG), 83–114 (TQYH…RDEQ), and 115–144 (GIVR…LNPV). Residues C46, C49, C52, C56, C92, C95, C100, C104, C124, C127, C130, C134, C151, C154, C167, and C171 each coordinate [4Fe-4S] cluster.

Post-translationally, predicted to be exported by the Tat system. The position of the signal peptide cleavage has not been experimentally proven.

This is an uncharacterized protein from Escherichia coli O157:H7.